Here is a 416-residue protein sequence, read N- to C-terminus: Tryptophan synthase beta chain (416 aa).

Lys98 is subject to N6-(pyridoxal phosphate)lysine.

It belongs to the TrpB family. In terms of assembly, tetramer of two alpha and two beta chains. Pyridoxal 5'-phosphate serves as cofactor.

It catalyses the reaction (1S,2R)-1-C-(indol-3-yl)glycerol 3-phosphate + L-serine = D-glyceraldehyde 3-phosphate + L-tryptophan + H2O. It participates in amino-acid biosynthesis; L-tryptophan biosynthesis; L-tryptophan from chorismate: step 5/5. Functionally, the beta subunit is responsible for the synthesis of L-tryptophan from indole and L-serine. The chain is Tryptophan synthase beta chain from Ruegeria pomeroyi (strain ATCC 700808 / DSM 15171 / DSS-3) (Silicibacter pomeroyi).